The following is a 474-amino-acid chain: DNA damage checkpoint control protein MEC3 (474 aa).

Residue S452 is modified to Phosphoserine.

Belongs to the MEC3 family. Component of the checkpoint clamp complex composed of DDC1, MEC3 and RAD17. The interaction with MEC3 is performed in a RAD17-dependent manner. The checkpoint clamp complex loads onto DNA. Interacts with the DNA polymerase zeta subunit REV7. Also forms a heterotrimer with 2 RAD17 subunits. Interacts with SET1.

The protein localises to the nucleus. Component of the checkpoint clamp complex involved in the surveillance mechanism that allows the DNA repair pathways to act to restore the integrity of the DNA prior to DNA synthesis or separation of the replicated chromosomes. Associates with sites of DNA damage and modulates the MEC1 signaling pathway and the activation of RAD53 in response to DNA damage at phase G1. The complex also physically regulates DNA polymerase zeta-dependent mutagenesis by controlling the access of polymerase zeta to damaged DNA. The protein is DNA damage checkpoint control protein MEC3 (MEC3) of Saccharomyces cerevisiae (strain ATCC 204508 / S288c) (Baker's yeast).